We begin with the raw amino-acid sequence, 307 residues long: Protein YIF1A (307 aa).

The interval 1-42 (MNFQQQGYRATKPRARASPPTGGPMLFDDTSSGPPPMNNQNY) is disordered. The Cytoplasmic portion of the chain corresponds to 1–148 (MNFQQQGYRA…TPRHDVNAPD (148 aa)). A helical membrane pass occupies residues 149–169 (LYIPTMAFITYILLAGMALGI). At 170-184 (QKRFSPEVLGLCAST) the chain is on the lumenal side. A helical transmembrane segment spans residues 185–205 (ALVWMIIEVLVMLLSLYLLTV). Topologically, residues 206-213 (HTDLSTFD) are cytoplasmic. The helical transmembrane segment at 214–236 (LVAYSGYKYVGMILTVFCGLLFG) threads the bilayer. The Lumenal segment spans residues 237–239 (SDG). Residues 240-259 (YYVALAWSSCALMFFIVRSL) form a helical membrane-spanning segment. Residues 260-285 (KMKILSSISADSMGAGASAKPRFRLY) are Cytoplasmic-facing. A helical transmembrane segment spans residues 286–306 (ITVASAAFQPFIIYWLTAHLV).

This sequence belongs to the YIF1 family.

The protein resides in the endoplasmic reticulum membrane. Its subcellular location is the golgi apparatus membrane. The protein localises to the endoplasmic reticulum-Golgi intermediate compartment membrane. Its function is as follows. Possible role in transport between endoplasmic reticulum and Golgi. This is Protein YIF1A (yif1a) from Danio rerio (Zebrafish).